Consider the following 95-residue polypeptide: MELVLVFLCSLLAPMVLASTAEKEKEMDPFHYDYQTLRIGGLVFAVVLFSVGILLILSRRCKCSFNQKPRAPGDEEAQVENLITANATEPQKAEN.

Residues 1–18 (MELVLVFLCSLLAPMVLA) form the signal peptide. The Extracellular segment spans residues 19-35 (STAEKEKEMDPFHYDYQ). Residues 36–58 (TLRIGGLVFAVVLFSVGILLILS) traverse the membrane as a helical segment. Residues 59 to 95 (RRCKCSFNQKPRAPGDEEAQVENLITANATEPQKAEN) lie on the Cytoplasmic side of the membrane.

Belongs to the FXYD family. In terms of assembly, regulatory subunit of the sodium/potassium-transporting ATPase which is composed of a catalytic alpha subunit, a non-catalytic beta subunit and an additional regulatory subunit. The regulatory subunit, a member of the FXYD protein family, modulates the enzymatic activity in a tissue- and isoform-specific way by changing affinities of the Na+/K+-ATPase toward Na(+), K(+) or ATP.

It localises to the cell membrane. In terms of biological role, associates with and regulates the activity of the sodium/potassium-transporting ATPase (NKA) which catalyzes the hydrolysis of ATP coupled with the exchange of Na(+) and K(+) ions across the plasma membrane. Reduces the apparent affinity for intracellular Na(+) with no change in the apparent affinity for extracellular K(+). In addition to modulating NKA kinetics, may also function as a regulator of NKA localization to the plasma membrane. The protein is FXYD domain-containing ion transport regulator 6 (FXYD6) of Macaca fascicularis (Crab-eating macaque).